The sequence spans 422 residues: 5'-deoxyadenosine deaminase (422 aa).

Zn(2+) contacts are provided by histidine 57 and histidine 59. 2 residues coordinate substrate: glutamate 86 and histidine 178. Histidine 205 is a binding site for Zn(2+). Substrate-binding residues include glutamate 208 and aspartate 294. Residue aspartate 294 coordinates Zn(2+).

Belongs to the metallo-dependent hydrolases superfamily. MTA/SAH deaminase family. Homotetramer. Zn(2+) serves as cofactor.

It catalyses the reaction 5'-deoxyadenosine + H2O + H(+) = 5'-deoxyinosine + NH4(+). It carries out the reaction S-adenosyl-L-homocysteine + H2O + H(+) = S-inosyl-L-homocysteine + NH4(+). The enzyme catalyses S-methyl-5'-thioadenosine + H2O + H(+) = S-methyl-5'-thioinosine + NH4(+). The catalysed reaction is adenosine + H2O + H(+) = inosine + NH4(+). It participates in amino-acid biosynthesis; S-adenosyl-L-methionine biosynthesis. Its function is as follows. Catalyzes the deamination of three SAM-derived enzymatic products, namely 5'-deoxyadenosine, S-adenosyl-L-homocysteine, and 5'-methylthioadenosine, to produce the inosine analogs. Can also deaminate adenosine. The preferred substrate for this enzyme is 5'-deoxyadenosine, but all these substrates are efficiently deaminated. Likely functions in a S-adenosyl-L-methionine (SAM) recycling pathway from S-adenosyl-L-homocysteine (SAH) produced from SAM-dependent methylation reactions. May also be involved in the recycling of 5'-deoxyadenosine, whereupon the 5'-deoxyribose moiety of 5'-deoxyinosine is further metabolized to deoxyhexoses used for the biosynthesis of aromatic amino acids in methanogens. In Methanococcus vannielii (strain ATCC 35089 / DSM 1224 / JCM 13029 / OCM 148 / SB), this protein is 5'-deoxyadenosine deaminase.